The primary structure comprises 24 residues: Hyaluronidase (24 aa).

In terms of tissue distribution, expressed by the venom gland.

It localises to the secreted. The enzyme catalyses Random hydrolysis of (1-&gt;4)-linkages between N-acetyl-beta-D-glucosamine and D-glucuronate residues in hyaluronate.. In terms of biological role, possesses high activity against hyaluronan in vitro. This chain is Hyaluronidase, found in Tityus stigmurus (Brazilian scorpion).